Here is a 232-residue protein sequence, read N- to C-terminus: Large ribosomal subunit protein uL1 (232 aa).

This sequence belongs to the universal ribosomal protein uL1 family. In terms of assembly, part of the 50S ribosomal subunit.

Functionally, binds directly to 23S rRNA. The L1 stalk is quite mobile in the ribosome, and is involved in E site tRNA release. In terms of biological role, protein L1 is also a translational repressor protein, it controls the translation of the L11 operon by binding to its mRNA. The protein is Large ribosomal subunit protein uL1 of Chlamydia caviae (strain ATCC VR-813 / DSM 19441 / 03DC25 / GPIC) (Chlamydophila caviae).